Reading from the N-terminus, the 140-residue chain is ATP synthase epsilon chain (140 aa).

The protein belongs to the ATPase epsilon chain family. In terms of assembly, F-type ATPases have 2 components, CF(1) - the catalytic core - and CF(0) - the membrane proton channel. CF(1) has five subunits: alpha(3), beta(3), gamma(1), delta(1), epsilon(1). CF(0) has three main subunits: a, b and c.

The protein resides in the cell inner membrane. Its function is as follows. Produces ATP from ADP in the presence of a proton gradient across the membrane. In Janthinobacterium sp. (strain Marseille) (Minibacterium massiliensis), this protein is ATP synthase epsilon chain.